Here is a 96-residue protein sequence, read N- to C-terminus: uncharacterized protein (96 aa).

In terms of biological role, essential for virus function. This is an uncharacterized protein from Saccharolobus solfataricus (Sulfolobus solfataricus).